Here is a 298-residue protein sequence, read N- to C-terminus: Probable endonuclease 4 (298 aa).

9 residues coordinate Zn(2+): histidine 69, histidine 111, glutamate 146, aspartate 180, histidine 183, histidine 215, aspartate 228, histidine 230, and glutamate 260.

It belongs to the AP endonuclease 2 family. Zn(2+) is required as a cofactor.

The enzyme catalyses Endonucleolytic cleavage to 5'-phosphooligonucleotide end-products.. Endonuclease IV plays a role in DNA repair. It cleaves phosphodiester bonds at apurinic or apyrimidinic (AP) sites, generating a 3'-hydroxyl group and a 5'-terminal sugar phosphate. This is Probable endonuclease 4 from Bacillus cereus (strain AH820).